Consider the following 853-residue polypeptide: DNA mismatch repair protein MutS (853 aa).

613–620 (GPNMGGKS) contacts ATP.

The protein belongs to the DNA mismatch repair MutS family.

Its function is as follows. This protein is involved in the repair of mismatches in DNA. It is possible that it carries out the mismatch recognition step. This protein has a weak ATPase activity. This Vibrio atlanticus (strain LGP32) (Vibrio splendidus (strain Mel32)) protein is DNA mismatch repair protein MutS.